A 2237-amino-acid chain; its full sequence is Activating signal cointegrator 1 complex subunit 3-like (2237 aa).

Disordered stretches follow at residues 1–48, 71–118, 242–330, and 445–472; these read MSEE…RGEM, TIEK…KPID, DEEE…SKLI, and EKTI…DEIK. The segment covering 24–37 has biased composition (basic and acidic residues); the sequence is ERNRSELKEPKGEP. A compositionally biased stretch (polar residues) spans 79 to 97; sequence VNSSNDTYSTTKKVKNQNP. Over residues 105-114 the composition is skewed to low complexity; the sequence is RKSNGNNNNE. Residues 242–282 show a composition bias toward acidic residues; the sequence is DEEEEEENLSDFEIRDDDDDDDDVDNNEVDDNNNNDSEAQD. Composition is skewed to basic and acidic residues over residues 312-325 and 446-460; these read QKPD…DKNN and KTIE…DVEM. Residues 440-468 adopt a coiled-coil conformation; that stretch reads TAATTEKTIEKTESNKKDVEMKQQQQQQQ. The Helicase ATP-binding 1 domain occupies 561 to 745; that stretch reads DCAFKTDNNL…FLRVEPDGVF (185 aa). 574–581 contributes to the ATP binding site; the sequence is APTSSGKT. Residues 687 to 690 carry the DEAH box motif; it reads DEIH. The Helicase C-terminal 1 domain occupies 755–990; that stretch reads PLEQQYIGIS…TVRDAVNWLG (236 aa). One can recognise an SEC63 1 domain in the interval 1050–1356; sequence STELGKVASH…GAEYSLPISF (307 aa). A Helicase ATP-binding 2 domain is found at 1407–1584; sequence NCMYQSNDNA…WIGATPQTCY (178 aa). Residue 1420-1427 participates in ATP binding; it reads APTNSGKT. Positions 1526 to 1529 match the DEAH box motif; the sequence is DELH. Residues 1657–1832 form the Helicase C-terminal 2 domain; the sequence is TLTKPYLVCE…TITKKQDALD (176 aa). The 324-residue stretch at 1892 to 2215 folds into the SEC63 2 domain; it reads PLNLGIIASY…GCDQEHELNI (324 aa).

The protein belongs to the helicase family.

In Dictyostelium discoideum (Social amoeba), this protein is Activating signal cointegrator 1 complex subunit 3-like (ascc3l).